The primary structure comprises 116 residues: PTS system cellobiose-specific EIIA component (116 aa).

In terms of domain architecture, PTS EIIA type-3 spans 11-109; it reads DDYMGVVMGI…AVEVVGQEQR (99 aa). The active-site Tele-phosphohistidine intermediate is His85. His85 is subject to Phosphohistidine; by HPr. Position 88 (Asp88) interacts with Mg(2+).

In terms of assembly, homotrimer. Mg(2+) is required as a cofactor.

Its function is as follows. The phosphoenolpyruvate-dependent sugar phosphotransferase system (sugar PTS), a major carbohydrate active transport system, catalyzes the phosphorylation of incoming sugar substrates concomitantly with their translocation across the cell membrane. Involved in cellobiose transport with PtcB and CelB. This system can also transport lactose. This is PTS system cellobiose-specific EIIA component from Lactococcus lactis subsp. lactis (strain IL1403) (Streptococcus lactis).